The primary structure comprises 102 residues: NADH-quinone oxidoreductase subunit K (102 aa).

3 consecutive transmembrane segments (helical) span residues 5 to 25 (LAHY…GIFL), 31 to 51 (IILL…FVAF), and 62 to 82 (VFVF…LAIL).

It belongs to the complex I subunit 4L family. In terms of assembly, NDH-1 is composed of 14 different subunits. Subunits NuoA, H, J, K, L, M, N constitute the membrane sector of the complex.

The protein localises to the cell inner membrane. It catalyses the reaction a quinone + NADH + 5 H(+)(in) = a quinol + NAD(+) + 4 H(+)(out). NDH-1 shuttles electrons from NADH, via FMN and iron-sulfur (Fe-S) centers, to quinones in the respiratory chain. The immediate electron acceptor for the enzyme in this species is believed to be ubiquinone. Couples the redox reaction to proton translocation (for every two electrons transferred, four hydrogen ions are translocated across the cytoplasmic membrane), and thus conserves the redox energy in a proton gradient. The chain is NADH-quinone oxidoreductase subunit K from Bordetella petrii (strain ATCC BAA-461 / DSM 12804 / CCUG 43448).